A 325-amino-acid chain; its full sequence is Cytochrome c biogenesis protein CcsA (325 aa).

Transmembrane regions (helical) follow at residues 14–34 (TFAILLPTLLCYWTGVAFPNL), 36–56 (GLPAIGTAGMAIANLCMAALL), 68–88 (ISNLYESLFFLAWGLTAIHLL), 97–117 (LVGAATSPLALGIVAFAAFTL), 142–162 (VMMVSYAALLVGSLLSVAFLV), 233–253 (VIGLGFPLLTIGIIAGAVWAN), 260–280 (WSWDPKETWALITWLVFAAYL), and 294–314 (AILATVGFGVVWVCYLGVNLL).

The protein belongs to the CcmF/CycK/Ccl1/NrfE/CcsA family. May interact with ccs1.

The protein localises to the cellular thylakoid membrane. Its function is as follows. Required during biogenesis of c-type cytochromes (cytochrome c6 and cytochrome f) at the step of heme attachment. The chain is Cytochrome c biogenesis protein CcsA from Synechococcus sp. (strain ATCC 27144 / PCC 6301 / SAUG 1402/1) (Anacystis nidulans).